The primary structure comprises 290 residues: Ribonuclease 3 (290 aa).

Positions 20–145 (YSCFYRILGF…FIGAIYLDRG (126 aa)) constitute an RNase III domain. Glutamate 62 is a binding site for Mg(2+). Residue aspartate 66 is part of the active site. 2 residues coordinate Mg(2+): asparagine 131 and glutamate 134. Glutamate 134 is an active-site residue. Residues 173 to 242 (NFKSKLIEWS…AQMTLKKIKG (70 aa)) form the DRBM domain. Residues 254 to 290 (KTQNNVPAEDTTPESETSLTAENQQIDEIISTEEISV) form a disordered region. Positions 267–279 (ESETSLTAENQQI) are enriched in polar residues.

This sequence belongs to the ribonuclease III family. As to quaternary structure, homodimer. Mg(2+) is required as a cofactor.

It is found in the cytoplasm. It catalyses the reaction Endonucleolytic cleavage to 5'-phosphomonoester.. In terms of biological role, digests double-stranded RNA. Involved in the processing of primary rRNA transcript to yield the immediate precursors to the large and small rRNAs (23S and 16S). Processes some mRNAs, and tRNAs when they are encoded in the rRNA operon. Processes pre-crRNA and tracrRNA of type II CRISPR loci if present in the organism. The protein is Ribonuclease 3 of Bacteroides fragilis (strain ATCC 25285 / DSM 2151 / CCUG 4856 / JCM 11019 / LMG 10263 / NCTC 9343 / Onslow / VPI 2553 / EN-2).